The following is a 616-amino-acid chain: MALLQIAEPGQSSAPHQHKLAAGIDLGTTNSLVASVRSGTASTLVDSQGRSILPSVVNYGADATRVGYPAREQAETDPHNTVISVKRLLGRSLQDINQRYPHLPYRFKASEKGLPIVQTAQGDKNPIQISADILKALAERATATLGGELAGVVITVPAYFDDAQRVATKDAAALAGLHVLRLLNEPTAAAIAYGLDSGQEGVIAVYDLGGGTFDISILRLSRGVFEVLATGGDSALGGDDFDHLIADHLQAQIGLTSLTAEQQRALINAATQAKIDLTEYMTAELNVLGWQGSLTREELENLIAPLLKKTLLSCRRALKDAGVEADEVLEVVMVGGSTRTPFVREQVGEFFGRTPLTSINPDEVVAIGAAIQADILAGNKPDAEMLLLDVIPLSLGIETMGGLVEKIIPRNTTIPVARAQEFTTFKDGQTAMSVHVVQGEREMVDDCRSLARFSLKGIPPMAAGAAHIRVTYQVDADGLLSVTALEKSTGVQAEIQVKPSYGLSDDEVTQMLKDSMAYAKEDMLARALAEQRVEADRVIEGLVSALQADGDELLNEQERQTLLQAIERLIELRNGDNADAIEQGIKDTDKASQDFASRRMDKSIRSALAGHSVDEI.

This sequence belongs to the heat shock protein 70 family.

Functionally, probable chaperone. Has a low intrinsic ATPase activity which is markedly stimulated by HscB. The protein is Chaperone protein HscA homolog of Vibrio cholerae serotype O1 (strain ATCC 39315 / El Tor Inaba N16961).